The sequence spans 571 residues: Phosphoenolpyruvate-protein phosphotransferase (571 aa).

Histidine 189 acts as the Tele-phosphohistidine intermediate in catalysis. Phosphoenolpyruvate-binding residues include arginine 296 and arginine 332. The Mg(2+) site is built by glutamate 431 and aspartate 455. Phosphoenolpyruvate contacts are provided by residues 454 to 455 and arginine 465; that span reads ND. The active-site Proton donor is cysteine 502.

Belongs to the PEP-utilizing enzyme family. Homodimer. Mg(2+) is required as a cofactor.

It localises to the cytoplasm. The enzyme catalyses L-histidyl-[protein] + phosphoenolpyruvate = N(pros)-phospho-L-histidyl-[protein] + pyruvate. Its function is as follows. General (non sugar-specific) component of the phosphoenolpyruvate-dependent sugar phosphotransferase system (sugar PTS). This major carbohydrate active-transport system catalyzes the phosphorylation of incoming sugar substrates concomitantly with their translocation across the cell membrane. Enzyme I transfers the phosphoryl group from phosphoenolpyruvate (PEP) to the phosphoryl carrier protein (HPr). This is Phosphoenolpyruvate-protein phosphotransferase (ptsI) from Buchnera aphidicola subsp. Acyrthosiphon pisum (strain APS) (Acyrthosiphon pisum symbiotic bacterium).